A 481-amino-acid chain; its full sequence is uncharacterized protein (481 aa).

The next 11 helical transmembrane spans lie at 14-34 (LGFC…GIFL), 46-66 (FAPM…IVFA), 90-110 (IGIY…GVLA), 134-154 (FSVK…INLF), 167-187 (TVGK…IITT), 218-238 (FSSM…FESI), 258-278 (IAIF…MLLG), 303-323 (IIVV…SFGA), 377-397 (LAVI…IALA), 411-431 (AFTD…LAVS), and 446-466 (YFSI…AYLH).

The protein belongs to the amino acid-polyamine-organocation (APC) superfamily.

The protein localises to the cell membrane. Its function is as follows. Probable amino-acid or metabolite transport protein. This is an uncharacterized protein from Mycobacterium bovis (strain ATCC BAA-935 / AF2122/97).